Consider the following 632-residue polypeptide: Chaperone protein HtpG (632 aa).

The a; substrate-binding stretch occupies residues 1 to 339 (MTQQTMSFQA…SSDLPLNVSR (339 aa)). Residues 340 to 559 (EILQESRDVK…DNDMSGYLQR (220 aa)) are b. The c stretch occupies residues 560–632 (MLKAAGQSAP…TNALLLSRAA (73 aa)).

Belongs to the heat shock protein 90 family. As to quaternary structure, homodimer.

Its subcellular location is the cytoplasm. In terms of biological role, molecular chaperone. Has ATPase activity. The sequence is that of Chaperone protein HtpG from Burkholderia pseudomallei (strain 668).